We begin with the raw amino-acid sequence, 186 residues long: Peptidyl-tRNA hydrolase (186 aa).

Y14 is a binding site for tRNA. H19 acts as the Proton acceptor in catalysis. TRNA is bound by residues Y61, N63, and N107.

The protein belongs to the PTH family. In terms of assembly, monomer.

The protein resides in the cytoplasm. The catalysed reaction is an N-acyl-L-alpha-aminoacyl-tRNA + H2O = an N-acyl-L-amino acid + a tRNA + H(+). In terms of biological role, hydrolyzes ribosome-free peptidyl-tRNAs (with 1 or more amino acids incorporated), which drop off the ribosome during protein synthesis, or as a result of ribosome stalling. Functionally, catalyzes the release of premature peptidyl moieties from peptidyl-tRNA molecules trapped in stalled 50S ribosomal subunits, and thus maintains levels of free tRNAs and 50S ribosomes. This chain is Peptidyl-tRNA hydrolase, found in Helicobacter pylori (strain HPAG1).